We begin with the raw amino-acid sequence, 397 residues long: Ethanolaminephosphotransferase 1 (397 aa).

Ala-2 carries the N-acetylalanine modification. The next 10 membrane-spanning stretches (helical) occupy residues 47-69 (WLAP…LLMA), 84-103 (HVPD…AYTL), 123-145 (LFDH…SIFG), 150-172 (GVSV…LSHW), 179-201 (ILFL…IVTA), 221-243 (LFTA…LNFF), 256-278 (VYEA…AWIL), 291-310 (VFYF…LIVC), 317-339 (CPTL…LGVA), and 344-366 (SILL…VRVV). Residue Sec-387 is a non-standard amino acid, selenocysteine.

It belongs to the CDP-alcohol phosphatidyltransferase class-I family. It depends on Mg(2+) as a cofactor. Mn(2+) serves as cofactor. Widely expressed. Abundant in brain, placenta, liver and pancreas, followed by heart, skeletal muscle, lung and kidney. In brain it is strongly expressed in cerebellum, followed by the occipital pole and the frontal lobe.

It is found in the endoplasmic reticulum membrane. It catalyses the reaction CDP-ethanolamine + a 1,2-diacyl-sn-glycerol = a 1,2-diacyl-sn-glycero-3-phosphoethanolamine + CMP + H(+). The catalysed reaction is 1-O-alkyl-2-acyl-sn-glycerol + CDP-ethanolamine = a 1-O-alkyl-2-acyl-sn-glycero-3-phosphoethanolamine + CMP + H(+). It participates in phospholipid metabolism; phosphatidylethanolamine biosynthesis; phosphatidylethanolamine from ethanolamine: step 3/3. Ethanolaminephosphotransferase that catalyzes the transfer of phosphoethanolamine (PE) from CDP-ethanolamine to lipid acceptors, the final step in the synthesis of PE via the 'Kennedy' pathway. PE is the second most abundant phospholipid of membranes in mammals and is involved in various membrane-related cellular processes. The enzyme is critical for the synthesis of several PE species and also catalyzes the synthesis of plasmanyl-PE, a lipid required for proper myelination and neurodevelopment, from 1-alkyl-2-acylglycerol. This is Ethanolaminephosphotransferase 1 from Homo sapiens (Human).